We begin with the raw amino-acid sequence, 99 residues long: Late cornified envelope protein 4A (99 aa).

The segment at 78 to 99 is disordered; that stretch reads CYGSGSGQQSGGSGCCSGGGCC. Gly residues predominate over residues 81 to 99; the sequence is SGSGQQSGGSGCCSGGGCC.

This sequence belongs to the LCE family. Interacts with CYSRT1; the interaction is direct. Skin-specific. Expression was readily detected in adult trunk skin, adult arm skin, fetal skin, penal skin, vulva, esophagus and tongue. Not expressed in the cervix, rectum, lung, colon, or placenta.

Functionally, precursors of the cornified envelope of the stratum corneum. In Homo sapiens (Human), this protein is Late cornified envelope protein 4A (LCE4A).